The chain runs to 225 residues: Membrane protein (225 aa).

Residues 1-20 (MPNETNCTLDFEQSVQLFKE) lie on the Virion surface side of the membrane. Residues 21–41 (YNLFITAFLLFLTIILQYGYA) form a helical membrane-spanning segment. The Intravirion segment spans residues 42–51 (TRTKVIYTLK). Residues 52–72 (MIVLWCFWPLNIAVGVISCTY) traverse the membrane as a helical segment. The Virion surface segment spans residues 73–77 (PPNTG). Residues 78 to 98 (GLVVAIILTVFACLSFVGYWI) traverse the membrane as a helical segment. At 99–225 (QSIRLFKRCR…VATGGSSLYT (127 aa)) the chain is on the intravirion side.

The protein belongs to the gammacoronaviruses M protein family. As to quaternary structure, homomultimer. Interacts with envelope E protein in the budding compartment of the host cell, which is located between endoplasmic reticulum and the Golgi complex. Forms a complex with HE and S proteins. Interacts with nucleocapsid N protein. This interaction probably participates in RNA packaging into the virus.

It is found in the virion membrane. The protein resides in the host Golgi apparatus membrane. In terms of biological role, component of the viral envelope that plays a central role in virus morphogenesis and assembly via its interactions with other viral proteins. In Avian infectious bronchitis virus (strain Beaudette US) (IBV), this protein is Membrane protein.